We begin with the raw amino-acid sequence, 254 residues long: Caffeoyl-CoA O-methyltransferase (254 aa).

Residues 1–25 (MATTNVEENKQTQEQQPKEIKHQEV) are disordered. The span at 7–25 (EENKQTQEQQPKEIKHQEV) shows a compositional bias: basic and acidic residues. Position 28 (K28) interacts with substrate. Residues T70, E92, 94–95 (GV), S100, D118, and A147 contribute to the S-adenosyl-L-methionine site. D170 contributes to the substrate binding site. D170 lines the a divalent metal cation pocket. Residue D172 participates in S-adenosyl-L-methionine binding. D196 and N197 together coordinate a divalent metal cation. A substrate-binding site is contributed by N201.

The protein belongs to the class I-like SAM-binding methyltransferase superfamily. Cation-dependent O-methyltransferase family. CCoAMT subfamily. A divalent metal cation serves as cofactor.

It carries out the reaction (E)-caffeoyl-CoA + S-adenosyl-L-methionine = (E)-feruloyl-CoA + S-adenosyl-L-homocysteine + H(+). It participates in aromatic compound metabolism; phenylpropanoid biosynthesis. In terms of biological role, methylates caffeoyl-CoA to feruloyl-CoA and 5-hydroxyferuloyl-CoA to sinapoyl-CoA. Plays a role in the synthesis of feruloylated polysaccharides. Involved in the reinforcement of the plant cell wall. Also involved in the responding to wounding or pathogen challenge by the increased formation of cell wall-bound ferulic acid polymers. The chain is Caffeoyl-CoA O-methyltransferase from Mesembryanthemum crystallinum (Common ice plant).